A 308-amino-acid chain; its full sequence is MAKIMLGSHSVKSHGWKVAREHLCDWLILVVLGLIDIVLNVIEPFHRYIGPDMLTDLTFPFYEDTIPMWAVPIICILVPICIFIVYYYYRRDVYDLHHAILGIGFSCLVTGVTTDSIKDAVGRPRPNFFYRCFPNGKPKFHPDTKDVVCHGVKKIIKEGYKSFPSGHTSWSFAGLTFLAWYLSGKIKVFDRRGHVAKLCLVFLPILISILIGISRVDDYWHHWTDVFAGAIIGIFVASFSYLHFFPYPYDENGWAPHAYFRMLAERSTGRATTMTRTGSRGMLGNDVEPGNSASSPHDRHRESTDSDF.

A run of 6 helical transmembrane segments spans residues 26–46, 66–86, 93–113, 162–182, 193–213, and 226–246; these read WLILVVLGLIDIVLNVIEPFH, IPMWAVPIICILVPICIFIVY, VYDLHHAILGIGFSCLVTGVT, SFPSGHTSWSFAGLTFLAWYL, GHVAKLCLVFLPILISILIGI, and VFAGAIIGIFVASFSYLHFFP. The tract at residues 274–308 is disordered; that stretch reads MTRTGSRGMLGNDVEPGNSASSPHDRHRESTDSDF. The segment covering 296-308 has biased composition (basic and acidic residues); sequence PHDRHRESTDSDF.

This sequence belongs to the PA-phosphatase related phosphoesterase family.

Its subcellular location is the membrane. The polypeptide is Probable lipid phosphate phosphatase 4 (LPP4) (Arabidopsis thaliana (Mouse-ear cress)).